Reading from the N-terminus, the 1091-residue chain is MGWSNGPPSWAEMERVLNGKPRHAGVPAFDADGDVPRSRKRGAYQPPGRERVGSSVAYAELHAHSAYSFLDGASTPEELVEEAARLGLCALALTDHDGLYGAVRFAEAAAELDVRTVFGAELSLGATARTERPDPPGPHLLVLARGPEGYRRLSRQLAAAHLAGGEKGKPRYDFDALTEAAGGHWHILTGCRKGHVRQALSQGGPAAAQRALADLVDRFTPSRVSIELTHHGHPLDDERNAALAGLAPRFGVGIVATTGAHFADPSRGRLAMAMAAIRARRSLDSAAGWLAPLGGAHLRSGEEMARLFAWCPEAVTAAAELGERCAFGLQLIAPRLPPFDVPDGHTEDSWLRSLVMAGARERYGPPKSAPRAYSQIEHELKVIAQLRFPGYFLVVHDITRFCRDNDILCQGRGSAANSAVCYALGVTAVDPVANELLFERFLSPARDGPPDIDIDIESDQREKVIQYVYHKYGRDYAAQVANVITYRGRSAVRDMARALGFSPGQQDAWSKQVSHWTGQADDVDGIPEQVIDLATQIRNLPRHLGIHSGGMVICDRPIADVCPVEWARMANRSVLQWDKDDCAAIGLVKFDLLGLGMLSALHYAKDLVAEHKGIEVDLARLDLSEPAVYEMLARADSVGVFQVESRAQMATLPRLKPRVFYDLVVEVALIRPGPIQGGSVHPYIRRRNGVDPVIYEHPSMAPALRKTLGVPLFQEQLMQLAVDCAGFSAAEADQLRRAMGSKRSTERMRRLRGRFYDGMRALHGAPDEVIDRIYEKLEAFANFGFPESHALSFASLVFYSAWFKLHHPAAFCAALLRAQPMGFYSPQSLVADARRHGVAVHGPCVNASLAHATCENAGTEVRLGLGAVRYLGAELAEKLVAERTANGPFTSLPDLTSRVQLSVPQVEALATAGALGCFGMSRREALWAAGAAATGRPDRLPGVGSSSHIPALPGMSELELAAADVWATGVSPDSYPTQFLRADLDAMGVLPAERLGSVSDGDRVLIAGAVTHRQRPATAQGVTFINLEDETGMVNVLCTPGVWARHRKLAHTAPALLIRGQVQNASGAITVVAERMGRLTLAVGARSRDFR.

The interval 1–51 is disordered; the sequence is MGWSNGPPSWAEMERVLNGKPRHAGVPAFDADGDVPRSRKRGAYQPPGRER.

It belongs to the DNA polymerase type-C family. DnaE2 subfamily.

The protein resides in the cytoplasm. It carries out the reaction DNA(n) + a 2'-deoxyribonucleoside 5'-triphosphate = DNA(n+1) + diphosphate. Its function is as follows. DNA polymerase involved in damage-induced mutagenesis and translesion synthesis (TLS). It is not the major replicative DNA polymerase. This Mycobacterium bovis (strain ATCC BAA-935 / AF2122/97) protein is Error-prone DNA polymerase.